A 465-amino-acid polypeptide reads, in one-letter code: GTPase Der (465 aa).

EngA-type G domains lie at 27-190 (PVLA…PEAP) and 202-375 (RRIA…AGWE). GTP-binding positions include 33 to 40 (GRPNVGKS), 80 to 84 (DTGGW), 142 to 145 (NKVD), 208 to 215 (GRPNVGKS), 255 to 259 (DTAGI), and 320 to 323 (NKWD). The KH-like domain maps to 376-458 (TRVPTGRLNA…PIHISVRVRE (83 aa)).

It belongs to the TRAFAC class TrmE-Era-EngA-EngB-Septin-like GTPase superfamily. EngA (Der) GTPase family. Associates with the 50S ribosomal subunit.

GTPase that plays an essential role in the late steps of ribosome biogenesis. The sequence is that of GTPase Der from Streptomyces coelicolor (strain ATCC BAA-471 / A3(2) / M145).